A 379-amino-acid polypeptide reads, in one-letter code: Glucose-insensitive transcription protein 7 (379 aa).

In terms of domain architecture, CS spans 181-272 (SNRIRYDWSQ…VSEIKWEALV (92 aa)). Residues 292-379 (ASGNTKNKAK…PPQGMEPKKF (88 aa)) form the SGS domain. The interval 345-379 (SYTESNGTALSTNWKDVKSKTFETKPPQGMEPKKF) is disordered. The span at 346 to 358 (YTESNGTALSTNW) shows a compositional bias: polar residues.

Involved in cyclic AMP (cAMP) pathway, possibly by participating in the assembly or the conformational activation of specific multiprotein complexes. This is Glucose-insensitive transcription protein 7 (git7) from Schizosaccharomyces pombe (strain 972 / ATCC 24843) (Fission yeast).